The chain runs to 445 residues: Transcription termination factor MTERF15, mitochondrial (445 aa).

The N-terminal 25 residues, 1 to 25, are a transit peptide targeting the mitochondrion; the sequence is MASKLKTFINLRDYPITLFNQIRSL.

Belongs to the mTERF family.

The protein resides in the mitochondrion. Transcription termination factor required for mitochondrial NAD2 intron 3 splicing and normal membrane respiratory chain Complex I activity. Essential for normal plant growth and development. Binds to RNA but not to double-stranded DNA. The protein is Transcription termination factor MTERF15, mitochondrial of Arabidopsis thaliana (Mouse-ear cress).